Reading from the N-terminus, the 182-residue chain is Thioredoxin F-type, chloroplastic (182 aa).

Positions 1–22 are disordered; it reads MPLSLRLAPSPTALSPTTGGFS. In terms of domain architecture, Thioredoxin spans 52-177; it reads KRGDSSVVRC…LVAAIETARS (126 aa). Active-site nucleophile residues include C102 and C105. A disulfide bond links C102 and C105.

Belongs to the thioredoxin family. Plant F-type subfamily. Forms a complex with heterodimeric ferredoxin-thioredoxin reductase (FTR) and ferredoxin.

The protein localises to the plastid. Its subcellular location is the chloroplast. Its function is as follows. Participates in various redox reactions through the reversible oxidation of the active center dithiol to a disulfide. The F form is known to activate a number of enzymes of the photosynthetic carbon cycle. This chain is Thioredoxin F-type, chloroplastic (TRXF), found in Brassica napus (Rape).